Here is a 227-residue protein sequence, read N- to C-terminus: Cytochrome c oxidase subunit 2 (227 aa).

Over 1–14 (MAYPAQMGFQDATS) the chain is Mitochondrial intermembrane. Residues 15–45 (PIMEELLYFHDHTLMIVFMISSLVLYTISLM) traverse the membrane as a helical segment. At 46–59 (LTTSLTHTNTMNAQ) the chain is on the mitochondrial matrix side. Residues 60–87 (EVETVWTILPAIICILIALPSLRILYMM) traverse the membrane as a helical segment. Residues 88-227 (DEINNPSLTI…YFEKWLLTML (140 aa)) lie on the Mitochondrial intermembrane side of the membrane. Cu cation is bound by residues His-161, Cys-196, Glu-198, Cys-200, His-204, and Met-207. Glu-198 contacts Mg(2+). Tyr-218 carries the post-translational modification Phosphotyrosine.

It belongs to the cytochrome c oxidase subunit 2 family. As to quaternary structure, component of the cytochrome c oxidase (complex IV, CIV), a multisubunit enzyme composed of 14 subunits. The complex is composed of a catalytic core of 3 subunits MT-CO1, MT-CO2 and MT-CO3, encoded in the mitochondrial DNA, and 11 supernumerary subunits COX4I, COX5A, COX5B, COX6A, COX6B, COX6C, COX7A, COX7B, COX7C, COX8 and NDUFA4, which are encoded in the nuclear genome. The complex exists as a monomer or a dimer and forms supercomplexes (SCs) in the inner mitochondrial membrane with NADH-ubiquinone oxidoreductase (complex I, CI) and ubiquinol-cytochrome c oxidoreductase (cytochrome b-c1 complex, complex III, CIII), resulting in different assemblies (supercomplex SCI(1)III(2)IV(1) and megacomplex MCI(2)III(2)IV(2)). Found in a complex with TMEM177, COA6, COX18, COX20, SCO1 and SCO2. Interacts with TMEM177 in a COX20-dependent manner. Interacts with COX20. Interacts with COX16. The cofactor is Cu cation.

The protein resides in the mitochondrion inner membrane. The enzyme catalyses 4 Fe(II)-[cytochrome c] + O2 + 8 H(+)(in) = 4 Fe(III)-[cytochrome c] + 2 H2O + 4 H(+)(out). Functionally, component of the cytochrome c oxidase, the last enzyme in the mitochondrial electron transport chain which drives oxidative phosphorylation. The respiratory chain contains 3 multisubunit complexes succinate dehydrogenase (complex II, CII), ubiquinol-cytochrome c oxidoreductase (cytochrome b-c1 complex, complex III, CIII) and cytochrome c oxidase (complex IV, CIV), that cooperate to transfer electrons derived from NADH and succinate to molecular oxygen, creating an electrochemical gradient over the inner membrane that drives transmembrane transport and the ATP synthase. Cytochrome c oxidase is the component of the respiratory chain that catalyzes the reduction of oxygen to water. Electrons originating from reduced cytochrome c in the intermembrane space (IMS) are transferred via the dinuclear copper A center (CU(A)) of subunit 2 and heme A of subunit 1 to the active site in subunit 1, a binuclear center (BNC) formed by heme A3 and copper B (CU(B)). The BNC reduces molecular oxygen to 2 water molecules using 4 electrons from cytochrome c in the IMS and 4 protons from the mitochondrial matrix. The sequence is that of Cytochrome c oxidase subunit 2 (MT-CO2) from Daubentonia madagascariensis (Aye-aye).